The sequence spans 414 residues: Carbohydrate sulfotransferase 12 (414 aa).

At Met1–Arg5 the chain is on the cytoplasmic side. The helical; Signal-anchor for type II membrane protein transmembrane segment at Leu6–Trp26 threads the bilayer. Residues Asp27–Asp414 lie on the Lumenal side of the membrane. The disordered stretch occupies residues Gln80 to Arg125. Residues Glu99–Arg125 are compositionally biased toward basic and acidic residues. A glycan (N-linked (GlcNAc...) asparagine) is linked at Asn134. Pro171–Asn177 serves as a coordination point for 3'-phosphoadenylyl sulfate. A glycan (N-linked (GlcNAc...) asparagine) is linked at Asn209. Arg245–Ser253 provides a ligand contact to 3'-phosphoadenylyl sulfate. Residues Asn280 and Asn370 are each glycosylated (N-linked (GlcNAc...) asparagine).

The protein belongs to the sulfotransferase 2 family. As to expression, widely expressed. Expressed a high level in spinal chord, heart, spleen, thyroid, pituitary gland, adrenal gland, peripheral blood leukocytes, thymus, lung, small intestine, fetal kidney, fetal spleen and fetal lung.

The protein resides in the golgi apparatus membrane. The catalysed reaction is chondroitin beta-D-glucuronate + n 3'-phosphoadenylyl sulfate = chondroitin 4'-sulfate + n adenosine 3',5'-bisphosphate + n H(+). Functionally, catalyzes the transfer of sulfate to position 4 of the N-acetylgalactosamine (GalNAc) residue of chondroitin and desulfated dermatan sulfate. Chondroitin sulfate constitutes the predominant proteoglycan present in cartilage and is distributed on the surfaces of many cells and extracellular matrices. Activity toward partially desulfated dermatan sulfate is however lower. Does not form 4, 6-di-O-sulfated GalNAc when chondroitin sulfate C is used as an acceptor. The polypeptide is Carbohydrate sulfotransferase 12 (CHST12) (Homo sapiens (Human)).